Consider the following 123-residue polypeptide: Large ribosomal subunit protein bL12 (123 aa).

This sequence belongs to the bacterial ribosomal protein bL12 family. In terms of assembly, homodimer. Part of the ribosomal stalk of the 50S ribosomal subunit. Forms a multimeric L10(L12)X complex, where L10 forms an elongated spine to which 2 to 4 L12 dimers bind in a sequential fashion. Binds GTP-bound translation factors.

In terms of biological role, forms part of the ribosomal stalk which helps the ribosome interact with GTP-bound translation factors. Is thus essential for accurate translation. The sequence is that of Large ribosomal subunit protein bL12 from Mycoplasmopsis agalactiae (strain NCTC 10123 / CIP 59.7 / PG2) (Mycoplasma agalactiae).